A 133-amino-acid polypeptide reads, in one-letter code: Thioredoxin H2 (133 aa).

The interval 1–22 (MGGALSTVFGSGEDATAAGTES) is disordered. One can recognise a Thioredoxin domain in the interval 6-133 (STVFGSGEDA…LEKKVSKLRA (128 aa)). Catalysis depends on nucleophile residues Cys59 and Cys62. Cys59 and Cys62 are oxidised to a cystine.

It belongs to the thioredoxin family. Plant H-type subfamily. As to quaternary structure, interacts with MDH1.

Its subcellular location is the cytoplasm. It localises to the mitochondrion. In terms of biological role, thiol-disulfide oxidoreductase probably involved in the redox regulation of a number of cytosolic enzymes. Possesses insulin disulfide bonds reducing activity. This is Thioredoxin H2 (TRX2) from Arabidopsis thaliana (Mouse-ear cress).